The sequence spans 440 residues: WAS/WASL-interacting protein family member 2 (440 aa).

The span at Met-1–Thr-18 shows a compositional bias: pro residues. The tract at residues Met-1 to Gly-36 is disordered. Residues Gly-36–Val-53 enclose the WH2 domain. At Arg-37 the chain carries Asymmetric dimethylarginine. The segment at Lys-49–Lys-52 is binds actin. Disordered stretches follow at residues Ile-56–Thr-387 and Arg-419–Arg-440. Positions Pro-116 to Arg-133 are enriched in low complexity. Residues Arg-161–His-172 show a composition bias toward polar residues. Composition is skewed to pro residues over residues Ala-176–Leu-193, Glu-222–Pro-236, Ala-249–Pro-262, and Arg-356–Leu-378.

Belongs to the verprolin family. As to quaternary structure, interacts with WASL and WASP, and this interaction results in cytoplasmic relocation of these two proteins along actin filaments. Interacts with NCK2 resulting in the localization to sites of focal adhesions. No interaction was seen with WASF2 and WASF3. In terms of tissue distribution, expressed mainly in brain, colon, lung and stomach (at protein level). Ubiquitously expressed, with high expression in brain, kidney, lung, and placenta.

The protein resides in the cytoplasm. Its subcellular location is the cytoskeleton. In terms of biological role, plays an active role in the formation of cell surface protrusions downstream of activated PDGFB receptors. Plays an important role in actin-microspike formation through cooperation with WASL. May cooperate with WASP and WASL to induce mobilization and reorganization of the actin filament system. The sequence is that of WAS/WASL-interacting protein family member 2 (WIPF2) from Homo sapiens (Human).